We begin with the raw amino-acid sequence, 283 residues long: Pantothenate synthetase (283 aa).

30-37 (MGNLHAGH) contacts ATP. His37 serves as the catalytic Proton donor. Gln61 lines the (R)-pantoate pocket. Beta-alanine is bound at residue Gln61. 149–152 (GQKD) serves as a coordination point for ATP. Gln155 is a binding site for (R)-pantoate. Residues Val178 and 186 to 189 (LSSR) each bind ATP.

This sequence belongs to the pantothenate synthetase family. Homodimer.

The protein localises to the cytoplasm. It carries out the reaction (R)-pantoate + beta-alanine + ATP = (R)-pantothenate + AMP + diphosphate + H(+). Its pathway is cofactor biosynthesis; (R)-pantothenate biosynthesis; (R)-pantothenate from (R)-pantoate and beta-alanine: step 1/1. Catalyzes the condensation of pantoate with beta-alanine in an ATP-dependent reaction via a pantoyl-adenylate intermediate. This is Pantothenate synthetase from Hydrogenovibrio crunogenus (strain DSM 25203 / XCL-2) (Thiomicrospira crunogena).